Reading from the N-terminus, the 1129-residue chain is SMC5-SMC6 complex localization factor protein 2 (1129 aa).

Disordered regions lie at residues 71 to 178 (VKAR…SILN), 312 to 343 (NTSSSSHYKESVTGRSSPHQHDLSSTSFTEQA), and 955 to 1057 (MLYD…QLEG). Positions 72 to 87 (KARRHTLPHSSHRRSP) are enriched in basic residues. A compositionally biased stretch (polar residues) spans 93–110 (LLFQQRPRNSSGQFTHNP). Composition is skewed to basic and acidic residues over residues 112 to 130 (QKKDRMDNRDHKTSIKKEL) and 149 to 166 (RKSEASTGSERETKRPRV). Polar residues-rich tracts occupy residues 169 to 178 (QATSSSSILN) and 324 to 343 (TGRSSPHQHDLSSTSFTEQA). Acidic residues-rich tracts occupy residues 999–1014 (ESEEDDQSKDEEEEDW) and 1033–1048 (SAEDCVEDVSDAEEES).

It belongs to the FAM178 family.

The protein localises to the nucleus. Its function is as follows. Plays a role in the DNA damage response (DDR) pathway by regulating postreplication repair of UV-damaged DNA and genomic stability maintenance. Promotes the recruitment of the SMC5-SMC6 complex to DNA lesions. This chain is SMC5-SMC6 complex localization factor protein 2 (slf2), found in Danio rerio (Zebrafish).